Consider the following 304-residue polypeptide: Glycine--tRNA ligase alpha subunit (304 aa).

This sequence belongs to the class-II aminoacyl-tRNA synthetase family. In terms of assembly, tetramer of two alpha and two beta subunits.

The protein localises to the cytoplasm. It carries out the reaction tRNA(Gly) + glycine + ATP = glycyl-tRNA(Gly) + AMP + diphosphate. In Tolumonas auensis (strain DSM 9187 / NBRC 110442 / TA 4), this protein is Glycine--tRNA ligase alpha subunit.